We begin with the raw amino-acid sequence, 400 residues long: MTTFSEKEKIQLLADIVELQTENNNEIDVCNYLKDLFDKYDIKSEILKVNEHRANIVAEIGNGSPILALSGHMDVVDAGNQDNWTYPPFQLTEKAGKLYGRGTTDMKGGLMALVITLIELKEQNQLPQGTIRLLATAGEEKEQEGAKLLADKGYLDDVDGLIIAEPTGSGIYYAHKGSMSCKVTATGKAVHSSVPFIGDNAIDTLLEFYNQFKEKYSELKKHDTKHELDVAPMFKSLIGKEISEEDANYASGLTAVCSIINGGKQFNSVPDEASLEFNVRPVPEYDNDFIESFFQNIINDVDSNKLSLDIPSNHRPVTSDKNSKLITTIKDVASSYVEQDEIFVSALVGATDASSFLGDNKDNVDLAIFGPGNPLMAHQIDEYCLTVNIQISTSTFSLIK.

Position 72 (histidine 72) interacts with Zn(2+). Residue aspartate 74 is part of the active site. Aspartate 105 contributes to the Zn(2+) binding site. Glutamate 139 acts as the Proton acceptor in catalysis. Positions 140, 165, and 378 each coordinate Zn(2+).

This sequence belongs to the peptidase M20A family. Zn(2+) serves as cofactor. Requires Co(2+) as cofactor.

It carries out the reaction N-succinyl-(2S,6S)-2,6-diaminopimelate + H2O = (2S,6S)-2,6-diaminopimelate + succinate. It participates in amino-acid biosynthesis; L-lysine biosynthesis via DAP pathway; LL-2,6-diaminopimelate from (S)-tetrahydrodipicolinate (succinylase route): step 3/3. This is Probable succinyl-diaminopimelate desuccinylase (dapE) from Staphylococcus aureus (strain Mu50 / ATCC 700699).